The sequence spans 1048 residues: Integrin alpha-V (1048 aa).

An N-terminal signal peptide occupies residues 1–30 (MAFPPRRRLRLGPRGLPLLLSGLLLPLCRA). At 31–992 (FNLDVESPAE…WGIQPAPMPV (962 aa)) the chain is on the extracellular side. 7 FG-GAP repeats span residues 32 to 98 (NLDV…RRCQ), 109 to 170 (DYAK…VEYA), 173 to 225 (RSKN…VSKY), 237 to 291 (QLAT…GKNM), 292 to 357 (SSLH…GDFQ), 358 to 415 (TIKL…GLNA), and 419 to 482 (QILE…VYPS). Asn74 carries an N-linked (GlcNAc...) asparagine glycan. Disulfide bonds link Cys89–Cys97, Cys138–Cys158, and Cys172–Cys185. Ca(2+)-binding residues include Asp260, Asn262, Asp264, Ile266, and Asp268. 2 N-linked (GlcNAc...) asparagine glycosylation sites follow: Asn290 and Asn296. Positions 314, 316, 318, 320, 322, 379, 381, 383, 385, 387, 443, 445, 447, 449, and 451 each coordinate Ca(2+). N-linked (GlcNAc...) asparagine glycosylation occurs at Asn488. Intrachain disulfides connect Cys491-Cys502 and Cys508-Cys565. 2 N-linked (GlcNAc...) asparagine glycosylation sites follow: Asn554 and Asn615. 2 cysteine pairs are disulfide-bonded: Cys626–Cys632 and Cys698–Cys711. N-linked (GlcNAc...) asparagine glycans are attached at residues Asn704, Asn835, Asn851, and Asn874. 2 cysteine pairs are disulfide-bonded: Cys852-Cys914 and Cys904-Cys909. N-linked (GlcNAc...) asparagine glycans are attached at residues Asn945, Asn973, and Asn980. A helical membrane pass occupies residues 993–1016 (PVWVIILAVLAGLLLLAVLVFVMY). Residues 1017-1048 (RMGFFKRVRPPQEEQEREQLQPHENGEGNSET) are Cytoplasmic-facing. The GFFKR motif signature appears at 1019 to 1023 (GFFKR). A compositionally biased stretch (basic and acidic residues) spans 1027–1042 (PQEEQEREQLQPHENG). The tract at residues 1027–1048 (PQEEQEREQLQPHENGEGNSET) is disordered.

It belongs to the integrin alpha chain family. Heterodimer of an alpha and a beta subunit. The alpha subunit is composed of a heavy and a light chain linked by a disulfide bond. Alpha-V (ITGAV) associates with either beta-1 (ITGB1), beta-3 (ITGB3), beta-5 (ITGB5), beta-6 (ITGB6) or beta-8 (ITGB8). Interacts with RAB25. Interacts with CIB1. Integrins ITGAV:ITGB3 and ITGAV:ITGB5 interact with FBLN5 (via N-terminus). ITGAV:ITGB3 and ITGAV:ITGB5 interact with CCN3. ITGAV:ITGB3 interacts with ADGRA2. ITGAV:ITGB3 interacts with FGF2; it is likely that FGF2 can simultaneously bind ITGAV:ITGB3 and FGF receptors. ITGAV:ITGB3 interacts with SELP (via C-type lectin domain); the interaction mediates cell-cell interaction and adhesion. ITGAV:ITGB3 is found in a ternary complex with CX3CR1 and CX3CL1. ITGAV:ITGB3 is found in a ternary complex with NRG1 and ERBB3. ITGAV:ITGB3 is found in a ternary complex with FGF1 and FGFR1. ITGAV:ITGB3 is found in a ternary complex with IGF1 and IGF1R. ITGAV:ITGB3 interacts with IGF2. ITGAV:ITGB3 and ITGAV:ITGB6 interact with FBN1. ITGAV:ITGB3 interacts with CD9, CD81 and CD151 (via second extracellular domain). ITGAV:ITGB6 interacts with TGFB1. ITGAV:ITGB3 interacts with PTN. Forms a complex with PTPRZ1 and PTN that stimulates endothelial cell migration through ITGB3 'Tyr-773' phosphorylation. Interacts with TM4SF19. In terms of assembly, (Microbial infection) Alpha-V/beta-6 and alpha-V/beta-3 bind to foot-and-mouth disease virus (FMDV) VP1 protein and acts as a receptor for this virus.

It is found in the cell membrane. The protein localises to the cell junction. Its subcellular location is the focal adhesion. In terms of biological role, the alpha-V (ITGAV) integrins are receptors for vitronectin, cytotactin, fibronectin, fibrinogen, laminin, matrix metalloproteinase-2, osteopontin, osteomodulin, prothrombin, thrombospondin, TGFB1 and vWF. They recognize the sequence R-G-D in a wide array of ligands. Alpha-V integrins may play a role in embryo implantation, angiogenesis and wound healing. ITGAV:ITGB3 binds to fractalkine (CX3CL1) and may act as its coreceptor in CX3CR1-dependent fractalkine signaling. ITGAV:ITGB3 binds to NRG1 (via EGF domain) and this binding is essential for NRG1-ERBB signaling. ITGAV:ITGB3 binds to FGF1 and this binding is essential for FGF1 signaling. ITGAV:ITGB3 binds to FGF2 and this binding is essential for FGF2 signaling. ITGAV:ITGB3 binds to IGF1 and this binding is essential for IGF1 signaling. ITGAV:ITGB3 binds to IGF2 and this binding is essential for IGF2 signaling. ITGAV:ITGB3 binds to IL1B and this binding is essential for IL1B signaling. ITGAV:ITGB3 binds to PLA2G2A via a site (site 2) which is distinct from the classical ligand-binding site (site 1) and this induces integrin conformational changes and enhanced ligand binding to site 1. ITGAV:ITGB3 and ITGAV:ITGB6 act as receptors for fibrillin-1 (FBN1) and mediate R-G-D-dependent cell adhesion to FBN1. Integrin alpha-V/beta-6 or alpha-V/beta-8 (ITGAV:ITGB6 or ITGAV:ITGB8) mediates R-G-D-dependent release of transforming growth factor beta-1 (TGF-beta-1) from regulatory Latency-associated peptide (LAP), thereby playing a key role in TGF-beta-1 activation. ITGAV:ITGB3 acts as a receptor for CD40LG. ITGAV:ITGB3 acts as a receptor for IBSP and promotes cell adhesion and migration to IBSP. The polypeptide is Integrin alpha-V (ITGAV) (Bos taurus (Bovine)).